A 305-amino-acid chain; its full sequence is UDP-3-O-acyl-N-acetylglucosamine deacetylase (305 aa).

Residues His79, His238, and Asp242 each coordinate Zn(2+). The active-site Proton donor is the His265.

Belongs to the LpxC family. It depends on Zn(2+) as a cofactor.

The enzyme catalyses a UDP-3-O-[(3R)-3-hydroxyacyl]-N-acetyl-alpha-D-glucosamine + H2O = a UDP-3-O-[(3R)-3-hydroxyacyl]-alpha-D-glucosamine + acetate. The protein operates within glycolipid biosynthesis; lipid IV(A) biosynthesis; lipid IV(A) from (3R)-3-hydroxytetradecanoyl-[acyl-carrier-protein] and UDP-N-acetyl-alpha-D-glucosamine: step 2/6. Its function is as follows. Catalyzes the hydrolysis of UDP-3-O-myristoyl-N-acetylglucosamine to form UDP-3-O-myristoylglucosamine and acetate, the committed step in lipid A biosynthesis. In Mannheimia succiniciproducens (strain KCTC 0769BP / MBEL55E), this protein is UDP-3-O-acyl-N-acetylglucosamine deacetylase.